The sequence spans 284 residues: Bifunctional protein FolD (284 aa).

NADP(+)-binding positions include 165-167 (GRS) and Ser-190.

The protein belongs to the tetrahydrofolate dehydrogenase/cyclohydrolase family. In terms of assembly, homodimer.

It catalyses the reaction (6R)-5,10-methylene-5,6,7,8-tetrahydrofolate + NADP(+) = (6R)-5,10-methenyltetrahydrofolate + NADPH. The enzyme catalyses (6R)-5,10-methenyltetrahydrofolate + H2O = (6R)-10-formyltetrahydrofolate + H(+). The protein operates within one-carbon metabolism; tetrahydrofolate interconversion. Its function is as follows. Catalyzes the oxidation of 5,10-methylenetetrahydrofolate to 5,10-methenyltetrahydrofolate and then the hydrolysis of 5,10-methenyltetrahydrofolate to 10-formyltetrahydrofolate. This Streptococcus uberis (strain ATCC BAA-854 / 0140J) protein is Bifunctional protein FolD.